Consider the following 226-residue polypeptide: Large ribosomal subunit protein uL1 (226 aa).

It belongs to the universal ribosomal protein uL1 family. Part of the 50S ribosomal subunit.

Binds directly to 23S rRNA. The L1 stalk is quite mobile in the ribosome, and is involved in E site tRNA release. Functionally, protein L1 is also a translational repressor protein, it controls the translation of the L11 operon by binding to its mRNA. The chain is Large ribosomal subunit protein uL1 from Borrelia garinii subsp. bavariensis (strain ATCC BAA-2496 / DSM 23469 / PBi) (Borreliella bavariensis).